The chain runs to 86 residues: Large ribosomal subunit protein bL31B (86 aa).

The protein belongs to the bacterial ribosomal protein bL31 family. Type B subfamily. As to quaternary structure, part of the 50S ribosomal subunit.

The protein is Large ribosomal subunit protein bL31B of Citrobacter koseri (strain ATCC BAA-895 / CDC 4225-83 / SGSC4696).